The following is a 1215-amino-acid chain: DNA-directed RNA polymerase subunit beta' (1215 aa).

Residues Cys60, Cys62, Cys75, and Cys78 each contribute to the Zn(2+) site. Residues Asp449, Asp451, and Asp453 each coordinate Mg(2+). Cys818, Cys892, Cys899, and Cys902 together coordinate Zn(2+).

Belongs to the RNA polymerase beta' chain family. In terms of assembly, the RNAP catalytic core consists of 2 alpha, 1 beta, 1 beta' and 1 omega subunit. When a sigma factor is associated with the core the holoenzyme is formed, which can initiate transcription. Mg(2+) is required as a cofactor. Requires Zn(2+) as cofactor.

It carries out the reaction RNA(n) + a ribonucleoside 5'-triphosphate = RNA(n+1) + diphosphate. DNA-dependent RNA polymerase catalyzes the transcription of DNA into RNA using the four ribonucleoside triphosphates as substrates. The polypeptide is DNA-directed RNA polymerase subunit beta' (Limosilactobacillus fermentum (strain NBRC 3956 / LMG 18251) (Lactobacillus fermentum)).